Consider the following 174-residue polypeptide: Alpha-crystallin B chain (174 aa).

M1 is subject to N-acetylmethionine. Positions 55–163 (RMPSWLETGL…PERSIPITRE (109 aa)) constitute a sHSP domain. Residues H82, H103, E105, and H110 each coordinate Zn(2+). Positions 148 to 174 (RKQSDVPERSIPITREEKPAIAGAQRK) are disordered. Over residues 149–166 (KQSDVPERSIPITREEKP) the composition is skewed to basic and acidic residues.

Belongs to the small heat shock protein (HSP20) family. As to quaternary structure, heteromer composed of three CRYAA and one CRYAB subunits. Aggregates with homologous proteins, including the small heat shock protein HSPB1, to form large heteromeric complexes. Inter-subunit bridging via zinc ions enhances stability, which is crucial as there is no protein turn over in the lens. As to expression, lens as well as other tissues.

Functionally, may contribute to the transparency and refractive index of the lens. This Anas platyrhynchos (Mallard) protein is Alpha-crystallin B chain (CRYAB).